The sequence spans 276 residues: MTQELNLYIMSDSVGETGLRLAQAVAAQFPNFEAHYVRFPFIHTEEKIYSALDEAKKENALAIMTFVTSGFAQLATHYAKDQGVIAIDVMSPILSGIKSITHEEPNHVPGAVHDLNERYFDRISAMEFAVLYDDGKDPKGFLEADIVLLGVSRTSKTPLSLFLANRNLKVANLPLVPNAHIPEEIWSVDPKKIVGLTTDASVLMEFRRQRMIAYGLNPDTAYSARDQVNQELKFAEDLYKKIGCMVINTAHRSIEETATLILEHMGLDEFDNTETH.

ADP is bound at residue 150-157 (GVSRTSKT).

It belongs to the pyruvate, phosphate/water dikinase regulatory protein family. PDRP subfamily.

It carries out the reaction N(tele)-phospho-L-histidyl/L-threonyl-[pyruvate, phosphate dikinase] + ADP = N(tele)-phospho-L-histidyl/O-phospho-L-threonyl-[pyruvate, phosphate dikinase] + AMP + H(+). The enzyme catalyses N(tele)-phospho-L-histidyl/O-phospho-L-threonyl-[pyruvate, phosphate dikinase] + phosphate + H(+) = N(tele)-phospho-L-histidyl/L-threonyl-[pyruvate, phosphate dikinase] + diphosphate. Bifunctional serine/threonine kinase and phosphorylase involved in the regulation of the pyruvate, phosphate dikinase (PPDK) by catalyzing its phosphorylation/dephosphorylation. The protein is Putative pyruvate, phosphate dikinase regulatory protein of Lacticaseibacillus casei (strain BL23) (Lactobacillus casei).